The chain runs to 429 residues: UDP-N-acetylglucosamine 1-carboxyvinyltransferase (429 aa).

22–23 is a phosphoenolpyruvate binding site; it reads KN. Residue Arg102 coordinates UDP-N-acetyl-alpha-D-glucosamine. The active-site Proton donor is the Cys126. Cys126 carries the post-translational modification 2-(S-cysteinyl)pyruvic acid O-phosphothioketal. UDP-N-acetyl-alpha-D-glucosamine-binding positions include 131-135, Asp316, and Ile338; that span reads RPVDL.

Belongs to the EPSP synthase family. MurA subfamily.

It is found in the cytoplasm. The enzyme catalyses phosphoenolpyruvate + UDP-N-acetyl-alpha-D-glucosamine = UDP-N-acetyl-3-O-(1-carboxyvinyl)-alpha-D-glucosamine + phosphate. The protein operates within cell wall biogenesis; peptidoglycan biosynthesis. In terms of biological role, cell wall formation. Adds enolpyruvyl to UDP-N-acetylglucosamine. This chain is UDP-N-acetylglucosamine 1-carboxyvinyltransferase, found in Rhodopseudomonas palustris (strain HaA2).